We begin with the raw amino-acid sequence, 106 residues long: SDO1-like protein C21C3.19 (106 aa).

This sequence belongs to the SDO1-like family.

The protein resides in the cytoplasm. Its subcellular location is the nucleus. In terms of biological role, may play a role in RNA metabolism. The protein is SDO1-like protein C21C3.19 of Schizosaccharomyces pombe (strain 972 / ATCC 24843) (Fission yeast).